We begin with the raw amino-acid sequence, 246 residues long: Acetoacetate decarboxylase (246 aa).

K116 acts as the Schiff-base intermediate with acetoacetate in catalysis.

It belongs to the ADC family.

It carries out the reaction acetoacetate + H(+) = acetone + CO2. Catalyzes the conversion of acetoacetate to acetone and carbon dioxide. This chain is Acetoacetate decarboxylase, found in Burkholderia vietnamiensis (strain G4 / LMG 22486) (Burkholderia cepacia (strain R1808)).